We begin with the raw amino-acid sequence, 800 residues long: DNA topoisomerase 4 subunit A (800 aa).

The region spanning 31–495 (LPDVRDGLKP…EIEEIKIDKE (465 aa)) is the Topo IIA-type catalytic domain. The active-site O-(5'-phospho-DNA)-tyrosine intermediate is Tyr-119.

The protein belongs to the type II topoisomerase GyrA/ParC subunit family. ParC type 2 subfamily. As to quaternary structure, heterotetramer composed of ParC and ParE.

It localises to the cell membrane. The catalysed reaction is ATP-dependent breakage, passage and rejoining of double-stranded DNA.. In terms of biological role, topoisomerase IV is essential for chromosome segregation. It relaxes supercoiled DNA. Performs the decatenation events required during the replication of a circular DNA molecule. The sequence is that of DNA topoisomerase 4 subunit A from Staphylococcus aureus (strain N315).